The sequence spans 1476 residues: SH3 and multiple ankyrin repeat domains protein 2 (1476 aa).

Over residues 66–76 (LSPQLLQQTPS) the composition is skewed to polar residues. Residues 66–134 (LSPQLLQQTP…GANKDSLSTF (69 aa)) form a disordered region. The SH3 domain maps to 147-206 (VPGRLFVAVKPYQPQVDGEIPLHRGDRVKVLSIGEGGFWEGSARGHIGWFPAECVEEVQC). Valine 162 carries the post-translational modification Phosphoserine. The PDZ domain occupies 247–341 (TVVLQKKDNE…HLILKVVTVT (95 aa)). At serine 372 the chain carries Phosphoserine. The disordered stretch occupies residues 391 to 412 (RKKKDKPEEIVPASKPSRTAEN). Serine 456 bears the Phosphoserine mark. Threonine 485 bears the Phosphothreonine mark. The tract at residues 503 to 533 (LSMPDTSEDIPPPPQSVPPSPPPPSPTTYNC) is disordered. Over residues 512-528 (IPPPPQSVPPSPPPPSP) the composition is skewed to pro residues. Serine 586 is subject to Phosphoserine. 3 disordered regions span residues 659 to 916 (TIIV…KDRR), 946 to 983 (VPMA…TEGA), and 1057 to 1153 (PALA…ESMD). Low complexity predominate over residues 666–678 (STSSSGKSSQGSS). Over residues 711–722 (VRDREKRLEARR) the composition is skewed to basic and acidic residues. A Phosphoserine modification is found at serine 724. Gly residues predominate over residues 783–795 (LGGGEAGAQGEAG). A compositionally biased stretch (low complexity) spans 833–846 (RLLDPSSPLALALS). 2 stretches are compositionally biased toward basic and acidic residues: residues 847–868 (ARDR…KADL) and 899–916 (RRQE…KDRR). Position 903 is a phosphothreonine (threonine 903). The span at 1070 to 1085 (TSQPPTLNSSQPANST) shows a compositional bias: polar residues. The segment covering 1119 to 1130 (VDSRSSSDHHLE) has biased composition (basic and acidic residues). Over residues 1131–1151 (TTSTISTVSSISTLSSEGGES) the composition is skewed to low complexity. The short motif at 1169-1175 (PPVPPKP) is the SH3-binding element. 2 disordered regions span residues 1195–1216 (EDTD…SAQA) and 1260–1403 (NRGK…ISNK). The segment covering 1202-1212 (IPPPAPPPPPG) has biased composition (pro residues). Low complexity predominate over residues 1291–1305 (STVSGTRSTTVTFTV). The O-linked (GlcNAc) threonine glycan is linked to threonine 1292. Residues 1307-1317 (PGTSQPITLQS) are compositionally biased toward polar residues. Residues serine 1334 and serine 1338 each carry the phosphoserine modification. Positions 1364–1375 (LSDVFSLPSQSP) are enriched in polar residues. A compositionally biased stretch (low complexity) spans 1387–1401 (RSRSPSPSILQQPIS). The SAM domain maps to 1413-1476 (WTKPDVADWL…ERALKQLLDR (64 aa)).

The protein belongs to the SHANK family. In terms of assembly, is part of a complex with DLG4/PSD-95 and DLGAP1/GKAP. Interacts with CTTN/cortactin SH3 domain, DLGAP1/GKAP and alpha-latrotoxin receptor 1. Interacts with DNM2, DBNL, GRID2, BAIAP2, SLC9A3, PLCB3 and CFTR. Interacts (via proline-rich region) with PDE4D. Interacts with ABI1 (via SH3 domain). As to expression, detected in brain (at protein level), where it is highly expressed in Purkinje cells.

Its subcellular location is the apical cell membrane. The protein resides in the cytoplasm. It localises to the synapse. It is found in the postsynaptic density. The protein localises to the cell projection. Its subcellular location is the dendritic spine. The protein resides in the growth cone. Functionally, seems to be an adapter protein in the postsynaptic density (PSD) of excitatory synapses that interconnects receptors of the postsynaptic membrane including NMDA-type and metabotropic glutamate receptors, and the actin-based cytoskeleton. May play a role in the structural and functional organization of the dendritic spine and synaptic junction. The chain is SH3 and multiple ankyrin repeat domains protein 2 (Shank2) from Mus musculus (Mouse).